Here is a 246-residue protein sequence, read N- to C-terminus: Ubiquinone biosynthesis O-methyltransferase (246 aa).

S-adenosyl-L-methionine is bound by residues arginine 36, glycine 60, aspartate 81, and leucine 123.

Belongs to the methyltransferase superfamily. UbiG/COQ3 family.

It catalyses the reaction a 3-demethylubiquinol + S-adenosyl-L-methionine = a ubiquinol + S-adenosyl-L-homocysteine + H(+). The enzyme catalyses a 3-(all-trans-polyprenyl)benzene-1,2-diol + S-adenosyl-L-methionine = a 2-methoxy-6-(all-trans-polyprenyl)phenol + S-adenosyl-L-homocysteine + H(+). It participates in cofactor biosynthesis; ubiquinone biosynthesis. Functionally, O-methyltransferase that catalyzes the 2 O-methylation steps in the ubiquinone biosynthetic pathway. The chain is Ubiquinone biosynthesis O-methyltransferase from Rickettsia typhi (strain ATCC VR-144 / Wilmington).